The primary structure comprises 94 residues: uncharacterized protein (94 aa).

2 helical membrane-spanning segments follow: residues 7–24 (IFFI…SFNV) and 39–61 (AVPI…LLFL). The interval 68–94 (TRKQKREDSPTSAPTGGVSSPEHVDVP) is disordered.

It is found in the cell membrane. This is an uncharacterized protein from Treponema pallidum (strain Nichols).